Here is a 324-residue protein sequence, read N- to C-terminus: Beta-ketoacyl-[acyl-carrier-protein] synthase III (324 aa).

Active-site residues include C112 and H249. The segment at 250 to 254 (QANRR) is ACP-binding. The active site involves N279.

This sequence belongs to the thiolase-like superfamily. FabH family. In terms of assembly, homodimer.

It localises to the cytoplasm. The enzyme catalyses malonyl-[ACP] + acetyl-CoA + H(+) = 3-oxobutanoyl-[ACP] + CO2 + CoA. The protein operates within lipid metabolism; fatty acid biosynthesis. Its function is as follows. Catalyzes the condensation reaction of fatty acid synthesis by the addition to an acyl acceptor of two carbons from malonyl-ACP. Catalyzes the first condensation reaction which initiates fatty acid synthesis and may therefore play a role in governing the total rate of fatty acid production. Possesses both acetoacetyl-ACP synthase and acetyl transacylase activities. Its substrate specificity determines the biosynthesis of branched-chain and/or straight-chain of fatty acids. The polypeptide is Beta-ketoacyl-[acyl-carrier-protein] synthase III (Streptococcus pyogenes serotype M2 (strain MGAS10270)).